We begin with the raw amino-acid sequence, 377 residues long: Circumsporozoite protein (377 aa).

A signal peptide spans 1–22 (MKNFILLAVSSILLVDLFPTHC). Residues 51-294 (HVGQSASRGR…NNEGANAPNE (244 aa)) are disordered. A compositionally biased stretch (basic and acidic residues) spans 72-100 (DAKKKKDGKKAEPKNPRENKLKQPGDRAD). Residues 80–88 (KKAEPKNPR) are required for the binding to heparan sulfate proteoglycans (HSPGs) on the surface of host hepatocytes. The tract at residues 91-95 (KLKQP) is region I; contains the proteolytic cleavage site. A run of 20 repeats spans residues 95 to 103 (PGDRADGQP), 104 to 112 (AGDRADGQP), 113 to 121 (AGDRADGQP), 122 to 130 (AGDRADGQP), 131 to 139 (AGDRAAGQP), 140 to 148 (AGDRADGQP), 149 to 157 (AGDRADGQP), 158 to 166 (AGDRADGQP), 167 to 175 (AGDRADGQP), 176 to 184 (AGDRAAGQP), 185 to 193 (AGDRAAGQP), 194 to 202 (AGDRADGQP), 203 to 211 (AGDRAAGQP), 212 to 220 (AGDRADGQP), 221 to 229 (AGDRAAGQP), 230 to 238 (AGDRADGQP), 239 to 247 (AGDRAAGQP), 248 to 256 (AGDRAAGQP), 257 to 265 (AGDRAAGQA), and 266 to 274 (AGDRAAGQA). The 20 X 9 AA tandem repeats of [PA]-G-D-R-A-[DA]-G-Q-[PA] stretch occupies residues 95 to 274 (PGDRADGQPA…AAGDRAAGQA (180 aa)). A compositionally biased stretch (low complexity) spans 236–273 (GQPAGDRAAGQPAGDRAAGQPAGDRAAGQAAGDRAAGQ). A compositionally biased stretch (gly residues) spans 274–283 (AAGGNAGGQG). Positions 284–293 (QNNEGANAPN) are enriched in low complexity. Positions 303-355 (KVRATVGTEWTPCSVTCGVGVRVRRRVNAANKKPEDLTLNDLETDVCTMDKCA) constitute a TSP type-1 domain. 2 disulfide bridges follow: Cys-315-Cys-349 and Cys-319-Cys-354. A glycan (O-linked (Fuc) threonine) is linked at Thr-318. Residue Cys-354 is the site of GPI-anchor amidated cysteine attachment. Positions 355–377 (AGIFNVVSNSLGLVILLVLALFN) are cleaved as a propeptide — removed in mature form.

Belongs to the plasmodium circumsporozoite protein family. During host cell invasion, proteolytically cleaved at the cell membrane in the region I by a papain-like cysteine protease of parasite origin. Cleavage is triggered by the sporozoite contact with highly sulfated heparan sulfate proteoglycans (HSPGs) present on the host hepatocyte cell surface. Cleavage exposes the TSP type-1 (TSR) domain and is required for productive invasion of host hepatocytes but not for adhesion to the host cell membrane. Cleavage is dispensable for sporozoite development in the oocyst, motility and for traversal of host and vector cells. In terms of processing, O-glycosylated; maybe by POFUT2.

The protein resides in the cell membrane. Its subcellular location is the cytoplasm. Functionally, essential sporozoite protein. In the mosquito vector, required for sporozoite development in the oocyst, migration through the vector hemolymph and entry into the vector salivary glands. In the vertebrate host, required for sporozoite migration through the host dermis and infection of host hepatocytes. Binds to highly sulfated heparan sulfate proteoglycans (HSPGs) on the surface of host hepatocytes. In the vertebrate host, binds to highly sulfated heparan sulfate proteoglycans (HSPGs) on the surface of host hepatocytes and is required for sporozoite invasion of the host hepatocytes. This chain is Circumsporozoite protein, found in Plasmodium vivax (strain Salvador I).